The sequence spans 208 residues: Orotidine 5'-phosphate decarboxylase (208 aa).

Residues aspartate 7, lysine 29, 57-66 (DLKLADIPNT), serine 109, 162-172 (PGIGAQGGKAK), glycine 185, and arginine 186 contribute to the substrate site. Residue lysine 59 is the Proton donor of the active site.

Belongs to the OMP decarboxylase family. Type 1 subfamily. In terms of assembly, homodimer.

It catalyses the reaction orotidine 5'-phosphate + H(+) = UMP + CO2. Its pathway is pyrimidine metabolism; UMP biosynthesis via de novo pathway; UMP from orotate: step 2/2. Its function is as follows. Catalyzes the decarboxylation of orotidine 5'-monophosphate (OMP) to uridine 5'-monophosphate (UMP). The chain is Orotidine 5'-phosphate decarboxylase from Pyrococcus abyssi (strain GE5 / Orsay).